A 456-amino-acid chain; its full sequence is Adenylosuccinate lyase (456 aa).

N(6)-(1,2-dicarboxyethyl)-AMP-binding positions include 15–16, 90–92, and 122–123; these read RY, NHD, and TS. The Proton donor/acceptor role is filled by His171. Gln247 contacts N(6)-(1,2-dicarboxyethyl)-AMP. The active-site Proton donor/acceptor is the Ser295. Residues Ser296, 301–303, Asn309, Arg335, and 340–344 contribute to the N(6)-(1,2-dicarboxyethyl)-AMP site; these read KIN and STVLR.

It belongs to the lyase 1 family. Adenylosuccinate lyase subfamily. Homotetramer. Residues from neighboring subunits contribute catalytic and substrate-binding residues to each active site.

The enzyme catalyses N(6)-(1,2-dicarboxyethyl)-AMP = fumarate + AMP. The catalysed reaction is (2S)-2-[5-amino-1-(5-phospho-beta-D-ribosyl)imidazole-4-carboxamido]succinate = 5-amino-1-(5-phospho-beta-D-ribosyl)imidazole-4-carboxamide + fumarate. It functions in the pathway purine metabolism; AMP biosynthesis via de novo pathway; AMP from IMP: step 2/2. It participates in purine metabolism; IMP biosynthesis via de novo pathway; 5-amino-1-(5-phospho-D-ribosyl)imidazole-4-carboxamide from 5-amino-1-(5-phospho-D-ribosyl)imidazole-4-carboxylate: step 2/2. In terms of biological role, catalyzes two reactions in de novo purine nucleotide biosynthesis. Catalyzes the breakdown of 5-aminoimidazole- (N-succinylocarboxamide) ribotide (SAICAR or 2-[5-amino-1-(5-phospho-beta-D-ribosyl)imidazole-4-carboxamido]succinate) to 5-aminoimidazole-4-carboxamide ribotide (AICAR or 5-amino-1-(5-phospho-beta-D-ribosyl)imidazole-4-carboxamide) and fumarate, and of adenylosuccinate (ADS or N(6)-(1,2-dicarboxyethyl)-AMP) to adenosine monophosphate (AMP) and fumarate. The chain is Adenylosuccinate lyase (purB) from Buchnera aphidicola subsp. Schizaphis graminum (strain Sg).